The sequence spans 342 residues: Methylthioribose-1-phosphate isomerase (342 aa).

Substrate contacts are provided by residues 44–46 (RGA), arginine 85, and glutamine 192. Catalysis depends on aspartate 233, which acts as the Proton donor. Residue 243 to 244 (NK) coordinates substrate.

Belongs to the eIF-2B alpha/beta/delta subunits family. MtnA subfamily.

It catalyses the reaction 5-(methylsulfanyl)-alpha-D-ribose 1-phosphate = 5-(methylsulfanyl)-D-ribulose 1-phosphate. It functions in the pathway amino-acid biosynthesis; L-methionine biosynthesis via salvage pathway; L-methionine from S-methyl-5-thio-alpha-D-ribose 1-phosphate: step 1/6. Catalyzes the interconversion of methylthioribose-1-phosphate (MTR-1-P) into methylthioribulose-1-phosphate (MTRu-1-P). The protein is Methylthioribose-1-phosphate isomerase of Caldicellulosiruptor saccharolyticus (strain ATCC 43494 / DSM 8903 / Tp8T 6331).